A 325-amino-acid chain; its full sequence is MLKPFVFITKPIPEEIEAFIGEHCRYEVWQEDTLPSDVLFEKLKEAEGLLTSGTSGPSINRELLEHAPKLKVVSNQSVGYDNFDIEAMKERGVVGTHTPYTLDDTVADLAFSLILSSARRVAELDRFVRAGKWGTVEEEALFGIDVHHQTLGIIGMGRIGEQAARRAKFGFDMEVLYHNRHRKQETEDSIGVKYAELDTLLEQSDFILLITPLTDETYHMIGEREFKLMKNSAIFVNISRGKTVDEKALIRALQEGWIRGAGLDVYEKEPVTQDNPLLQLDNVTLLPHIGSATAKVRFNMCKQAAENMLAAIQGQTPKNLTREFQ.

Residues 158-159, Thr-211, 238-240, and Asp-264 contribute to the NAD(+) site; these read RI and ISR. The active site involves Arg-240. Glu-269 is an active-site residue. His-288 (proton donor) is an active-site residue. 288-291 lines the NAD(+) pocket; that stretch reads HIGS.

Belongs to the D-isomer specific 2-hydroxyacid dehydrogenase family.

It carries out the reaction D-gluconate + NADP(+) = 2-dehydro-D-gluconate + NADPH + H(+). In Bacillus subtilis (strain 168), this protein is Probable 2-ketogluconate reductase (yvcT).